Here is a 291-residue protein sequence, read N- to C-terminus: Kidney mitochondrial carrier protein 1 (291 aa).

S2 carries the post-translational modification N-acetylserine. Solcar repeat units follow at residues 7–96 (KPFV…LKRL), 104–189 (ETLL…TKKH), and 198–289 (DTVS…LKKL). 6 helical membrane-spanning segments follow: residues 9-26 (FVYG…TFPI), 71-89 (GIAP…KIGT), 106-124 (LLIN…SAIA), 164-183 (GVSL…LPVY), 204-224 (FLSS…VDVV), and 264-283 (GFWP…FLTY).

This sequence belongs to the mitochondrial carrier (TC 2.A.29) family. Interacts with VDAC1.

The protein resides in the mitochondrion inner membrane. It carries out the reaction sulfite(in) + sulfate(out) = sulfite(out) + sulfate(in). The enzyme catalyses thiosulfate(in) + sulfate(out) = thiosulfate(out) + sulfate(in). It catalyses the reaction sulfate(out) + phosphate(in) = sulfate(in) + phosphate(out). The catalysed reaction is oxalate(in) + sulfate(out) = oxalate(out) + sulfate(in). It carries out the reaction malonate(in) + sulfate(out) = malonate(out) + sulfate(in). The enzyme catalyses maleate(in) + sulfate(out) = maleate(out) + sulfate(in). It catalyses the reaction (S)-malate(in) + sulfate(out) = (S)-malate(out) + sulfate(in). The catalysed reaction is (3S)-citramalate(in) + sulfate(out) = (3S)-citramalate(out) + sulfate(in). It carries out the reaction (3R)-citramalate(in) + sulfate(out) = (3R)-citramalate(out) + sulfate(in). The enzyme catalyses sulfate(out) + succinate(in) = sulfate(in) + succinate(out). It catalyses the reaction (S,S)-tartrate(in) + sulfate(out) = (S,S)-tartrate(out) + sulfate(in). The catalysed reaction is (2R,3R)-tartrate(in) + sulfate(out) = (2R,3R)-tartrate(out) + sulfate(in). It carries out the reaction D-aspartate(in) + sulfate(out) = D-aspartate(out) + sulfate(in). The enzyme catalyses L-aspartate(in) + sulfate(out) = L-aspartate(out) + sulfate(in). It catalyses the reaction sulfate(in) = sulfate(out). The catalysed reaction is phosphate(in) = phosphate(out). It carries out the reaction (S)-malate(out) = (S)-malate(in). Functionally, antiporter that transports inorganic anions (sulfate, sulfite, thiosulfate and phosphate) and, to a lesser extent, a variety of dicarboxylates (e.g. malonate, malate and citramalate) and, even more so, aspartate. The sulfate/sulfate exchange is much higher than the phosphate/phosphate and malate/malate exchanges. The transport affinities is higher for sulfate and thiosulfate than for any other substrate. May catalyze the export of sulfite and thiosulfate (the hydrogen sulfide degradation products) from the mitochondria, thereby modulating the level of the hydrogen sulfide. Also may mediate a very low unidirectional transport of sulfate, phosphate and (S)-malate. The sequence is that of Kidney mitochondrial carrier protein 1 from Rattus norvegicus (Rat).